We begin with the raw amino-acid sequence, 1021 residues long: INO80 complex subunit D (1021 aa).

Residue Lys-87 forms a Glycyl lysine isopeptide (Lys-Gly) (interchain with G-Cter in SUMO2) linkage. Ser-132 is subject to Phosphoserine. Disordered stretches follow at residues 194-239 (FSTP…PMQG), 514-570 (RGDN…SMPT), 808-844 (RQQY…PHTS), 911-940 (SLST…SVLP), and 976-1021 (QLSS…PSPN). The span at 224–239 (VCKSPQPQNTSLPMQG) shows a compositional bias: polar residues. The segment covering 520 to 554 (KVQHQQQRKPRKKTKPPALTKKHKKKRRRGPRRPQ) has biased composition (basic residues). A compositionally biased stretch (low complexity) spans 911 to 926 (SLSTPPTTSNSETTQP). Residues 931-940 (VTPSSSSVLP) are compositionally biased toward polar residues. Residues 995–1014 (APPTGFTATGATATSTNNAS) show a composition bias toward low complexity.

It belongs to the INO80D family. As to quaternary structure, component of the chromatin remodeling INO80 complex; specifically part of a complex module associated with the N-terminus of INO80.

The protein resides in the nucleus. In terms of biological role, putative regulatory component of the chromatin remodeling INO80 complex which is involved in transcriptional regulation, DNA replication and probably DNA repair. The polypeptide is INO80 complex subunit D (Mus musculus (Mouse)).